The chain runs to 143 residues: Dehydrin DHN2 (143 aa).

Positions 1–10 (MEYQGQTGHA) are enriched in polar residues. The interval 1–143 (MEYQGQTGHA…IKEKLPGGQH (143 aa)) is disordered. Over residues 24-34 (GHGGATGGPTG) the composition is skewed to gly residues. Residues 35-46 (THGAAAAAAGTG) show a composition bias toward low complexity. Residues 51 to 61 (TRDDHKTDGVL) show a composition bias toward basic and acidic residues. A compositionally biased stretch (low complexity) spans 62–71 (RRSGSSSSSS). The span at 86–101 (KEKIKEKLPGGAHKDA) shows a compositional bias: basic and acidic residues. Positions 109–123 (AAGEYAGTGTHGAEA) are enriched in low complexity. Over residues 124-143 (TGEKKGVMDKIKEKLPGGQH) the composition is skewed to basic and acidic residues.

This sequence belongs to the plant dehydrin family.

The polypeptide is Dehydrin DHN2 (DHN2) (Hordeum vulgare (Barley)).